A 330-amino-acid polypeptide reads, in one-letter code: Phosphate acyltransferase (330 aa).

It belongs to the PlsX family. Homodimer. Probably interacts with PlsY.

It localises to the cytoplasm. It carries out the reaction a fatty acyl-[ACP] + phosphate = an acyl phosphate + holo-[ACP]. The protein operates within lipid metabolism; phospholipid metabolism. Its function is as follows. Catalyzes the reversible formation of acyl-phosphate (acyl-PO(4)) from acyl-[acyl-carrier-protein] (acyl-ACP). This enzyme utilizes acyl-ACP as fatty acyl donor, but not acyl-CoA. This Streptococcus agalactiae serotype III (strain NEM316) protein is Phosphate acyltransferase.